A 125-amino-acid polypeptide reads, in one-letter code: Ribonuclease P protein component (125 aa).

The protein belongs to the RnpA family. As to quaternary structure, consists of a catalytic RNA component (M1 or rnpB) and a protein subunit.

It carries out the reaction Endonucleolytic cleavage of RNA, removing 5'-extranucleotides from tRNA precursor.. In terms of biological role, RNaseP catalyzes the removal of the 5'-leader sequence from pre-tRNA to produce the mature 5'-terminus. It can also cleave other RNA substrates such as 4.5S RNA. The protein component plays an auxiliary but essential role in vivo by binding to the 5'-leader sequence and broadening the substrate specificity of the ribozyme. This Rhodococcus jostii (strain RHA1) protein is Ribonuclease P protein component.